The chain runs to 133 residues: Small ribosomal subunit protein uS8 (133 aa).

The protein belongs to the universal ribosomal protein uS8 family. In terms of assembly, part of the 30S ribosomal subunit. Contacts proteins S5 and S12.

In terms of biological role, one of the primary rRNA binding proteins, it binds directly to 16S rRNA central domain where it helps coordinate assembly of the platform of the 30S subunit. This Microcystis aeruginosa (strain NIES-843 / IAM M-2473) protein is Small ribosomal subunit protein uS8.